The primary structure comprises 95 residues: Small ubiquitin-related modifier 2-A (95 aa).

A Glycyl lysine isopeptide (Lys-Gly) (interchain with G-Cter in SUMO) cross-link involves residue lysine 11. The Ubiquitin-like domain maps to 16–95 (DHINLKVAGQ…VFQQQTGGSF (80 aa)). A Glycyl lysine isopeptide (Gly-Lys) (interchain with K-? in acceptor proteins) cross-link involves residue glycine 93. Residues 94-95 (SF) constitute a propeptide that is removed on maturation.

Belongs to the ubiquitin family. SUMO subfamily. As to quaternary structure, interacts with sae2 and ube2i. Covalently attached to a number of proteins, including top2. Post-translationally, polymeric chains can be formed through Lys-11 cross-linking. In terms of processing, cleavage of precursor form by a sentrin-specific protease is necessary for function.

Its subcellular location is the nucleus. Functionally, ubiquitin-like protein that can be covalently attached to proteins as a monomer or as a lysine-linked polymer. Covalent attachment via an isopeptide bond to its substrates requires prior activation by the E1 complex sae1-sae2 and linkage to the E2 enzyme ube2i, and can be promoted by an E3 ligase such as pias1-4. This post-translational modification on lysine residues of proteins plays a crucial role in a number of cellular processes such as nuclear transport, DNA replication and repair, mitosis and signal transduction. Polymeric sumo2 chains are also susceptible to polyubiquitination which functions as a signal for proteasomal degradation of modified proteins. The chain is Small ubiquitin-related modifier 2-A (sumo2-a) from Xenopus laevis (African clawed frog).